The chain runs to 659 residues: MTLLSPGIELKETTVQSTVVNNSTGTAALAGKFQWGPAFQIKQVTNEVDLVNTFGQPTAETADYFMSAMNFLQYGNDLRVVRAVDRDTAKNSSPIAGNIDYTISTPGSNYAVGDKITVKYVSDDIETEGKITEVDADGKIKKINIPTGKNYAKAKEVGEYPTLGSNWTAEISSSSSGLAAVITLGKIITDSGILLAEIENAEAAMTAVDFQANLKKYGIPGVVALYPGELGDKIEIEIVSKADYAKGASALLPIYPGGGTRASTAKAVFGYGPQTDSQYAIIVRRNDAIVQSVVLSTKRGEKDIYDSNIYIDDFFAKGGSEYIFATAQNWPEGFSGILTLSGGLSSNAEVTAGDLMEAWDFFADRESVDVQLFIAGSCAGESLETASTVQKHVVSIGDARQDCLVLCSPPRETVVGIPVTRAVDNLVNWRTAAGSYTDNNFNISSTYAAIDGNHKYQYDKYNDVNRWVPLAADIAGLCARTDNVSQTWMSPAGYNRGQILNVIKLAIETRQAQRDRLYQEAINPVTGTGGDGYVLYGDKTATSVPSPFDRINVRRLFNMLKTNIGRSSKYRLFELNNAFTRSSFRTETAQYLQGNKALGGIYEYRVVCDTTNNTPSVIDRNEFVATFYIQPARSINYITLNFVATATGADFDELTGLAG.

The protein belongs to the myoviridae tail sheath protein family. Hexamer.

It is found in the virion. Its function is as follows. Structural component of the bacteriophage tail which consists of a contractile sheath, a tube and a baseplate. The central cylindrical segment of the tail consists of a rigid tube, composed of multiple copies of gp19, surrounded by the outer contractile sheath assembled from gp18 subunits. A total of 138 copies of gp18 arranged into 23 hexameric rings constitutes the sheath. During infection, contraction of the sheath drives the central tube through the host outer membrane, creating a channel for DNA ejection from the capsid into the host cell. In Escherichia coli (Bacteriophage T4), this protein is Tail sheath protein (18).